The primary structure comprises 106 residues: Nucleoid-associated protein RPB_0667 (106 aa).

This sequence belongs to the YbaB/EbfC family. Homodimer.

It is found in the cytoplasm. It localises to the nucleoid. Functionally, binds to DNA and alters its conformation. May be involved in regulation of gene expression, nucleoid organization and DNA protection. This is Nucleoid-associated protein RPB_0667 from Rhodopseudomonas palustris (strain HaA2).